The following is a 601-amino-acid chain: Elongation factor 4 (601 aa).

Residues 7-189 (SNVRNFSIVA…AIVTRLPPPK (183 aa)) form the tr-type G domain. Residues 19–24 (DHGKST) and 136–139 (NKVD) contribute to the GTP site.

This sequence belongs to the TRAFAC class translation factor GTPase superfamily. Classic translation factor GTPase family. LepA subfamily.

The protein resides in the cell inner membrane. The enzyme catalyses GTP + H2O = GDP + phosphate + H(+). Its function is as follows. Required for accurate and efficient protein synthesis under certain stress conditions. May act as a fidelity factor of the translation reaction, by catalyzing a one-codon backward translocation of tRNAs on improperly translocated ribosomes. Back-translocation proceeds from a post-translocation (POST) complex to a pre-translocation (PRE) complex, thus giving elongation factor G a second chance to translocate the tRNAs correctly. Binds to ribosomes in a GTP-dependent manner. The protein is Elongation factor 4 of Afipia carboxidovorans (strain ATCC 49405 / DSM 1227 / KCTC 32145 / OM5) (Oligotropha carboxidovorans).